A 138-amino-acid chain; its full sequence is Small ribosomal subunit protein uS9c (138 aa).

The protein belongs to the universal ribosomal protein uS9 family.

The protein resides in the plastid. Its subcellular location is the chloroplast. This chain is Small ribosomal subunit protein uS9c (rps9), found in Trieres chinensis (Marine centric diatom).